Here is a 311-residue protein sequence, read N- to C-terminus: Olfactory receptor 10G9 (311 aa).

Topologically, residues 1-23 (MSKTSLVTAFILTGLPHAPGLDA) are extracellular. A helical membrane pass occupies residues 24 to 44 (PLFGIFLVVYVLTVLGNLLIL). The Cytoplasmic segment spans residues 45–52 (LVIRVDSH). A helical membrane pass occupies residues 53–73 (LHTPMYYFLTNLSFIDMWFST). The Extracellular segment spans residues 74 to 98 (VTVPKMLMTLVSPSGRAISFHSCVA). Residues Cys-96 and Cys-188 are joined by a disulfide bond. The chain crosses the membrane as a helical span at residues 99-119 (QLYFFHFLGSTECFLYTVMSY). The Cytoplasmic segment spans residues 120-138 (DRYLAISYPLRYTSMMSGS). The helical transmembrane segment at 139-159 (RCALLATSTWLSGSLHSAVQT) threads the bilayer. At 160–196 (ILTFHLPYCGPNQIQHYLCDAPPILKLACADTSANEM) the chain is on the extracellular side. The helical transmembrane segment at 197 to 216 (VIFVDIGLVASGCFLLIVLS) threads the bilayer. The Cytoplasmic portion of the chain corresponds to 217–236 (YVSIVCSILRIHTSEGRHRA). Residues 237–257 (FQTCASHCIVVLCFFVPCVFI) traverse the membrane as a helical segment. Residues 258–268 (YLRPGSRDVVD) are Extracellular-facing. A helical transmembrane segment spans residues 269 to 289 (GVVAIFYTVLTPLLNPVVYTL). Residues 290–311 (RNKEVKKAVLKLRDKVAHSQGE) lie on the Cytoplasmic side of the membrane.

Belongs to the G-protein coupled receptor 1 family.

Its subcellular location is the cell membrane. Functionally, odorant receptor. This is Olfactory receptor 10G9 (OR10G9) from Homo sapiens (Human).